Consider the following 144-residue polypeptide: Large ribosomal subunit protein uL11 (144 aa).

Belongs to the universal ribosomal protein uL11 family. As to quaternary structure, part of the ribosomal stalk of the 50S ribosomal subunit. Interacts with L10 and the large rRNA to form the base of the stalk. L10 forms an elongated spine to which L12 dimers bind in a sequential fashion forming a multimeric L10(L12)X complex. Post-translationally, one or more lysine residues are methylated.

Forms part of the ribosomal stalk which helps the ribosome interact with GTP-bound translation factors. The sequence is that of Large ribosomal subunit protein uL11 from Francisella tularensis subsp. holarctica (strain OSU18).